Consider the following 184-residue polypeptide: Large ribosomal subunit protein uL5 (184 aa).

It belongs to the universal ribosomal protein uL5 family. Part of the 50S ribosomal subunit; part of the 5S rRNA/L5/L18/L25 subcomplex. Contacts the 5S rRNA and the P site tRNA. Forms a bridge to the 30S subunit in the 70S ribosome.

This is one of the proteins that bind and probably mediate the attachment of the 5S RNA into the large ribosomal subunit, where it forms part of the central protuberance. In the 70S ribosome it contacts protein S13 of the 30S subunit (bridge B1b), connecting the 2 subunits; this bridge is implicated in subunit movement. Contacts the P site tRNA; the 5S rRNA and some of its associated proteins might help stabilize positioning of ribosome-bound tRNAs. This chain is Large ribosomal subunit protein uL5, found in Fervidobacterium nodosum (strain ATCC 35602 / DSM 5306 / Rt17-B1).